We begin with the raw amino-acid sequence, 188 residues long: uncharacterized protein (188 aa).

Positions 1–23 are cleaved as a signal peptide; it reads MVRPKLAFYILPLLLAFLGSALG. N-linked (GlcNAc...) asparagine glycosylation is present at Asn74.

This is an uncharacterized protein from Mus musculus (Mouse).